Here is a 206-residue protein sequence, read N- to C-terminus: MTASVLRSISLALRPTSGLLGTWQTQLRETHQRASLLSFWELIPMRSEPLRKKKKVDPKKDQEAKERLKRKIRKLEKATQELIPIEDFITPLKFLDKARERPQVELTFEETERRALLLKKWSLYKQQERKMERDTIRAMLEAQQEALEELQLESPKLHAEAIKRDPNLFPFEKEGPHYTPPIPNYQPPEGRYNDITKVYTQVEFKR.

Residues 1 to 46 constitute a mitochondrion transit peptide; sequence MTASVLRSISLALRPTSGLLGTWQTQLRETHQRASLLSFWELIPMR. The tract at residues 168–192 is disordered; that stretch reads LFPFEKEGPHYTPPIPNYQPPEGRY.

The protein belongs to the mitochondrion-specific ribosomal protein mL40 family. Component of the mitochondrial large ribosomal subunit (mt-LSU). Mature mammalian 55S mitochondrial ribosomes consist of a small (28S) and a large (39S) subunit. The 28S small subunit contains a 12S ribosomal RNA (12S mt-rRNA) and 30 different proteins. The 39S large subunit contains a 16S rRNA (16S mt-rRNA), a copy of mitochondrial valine transfer RNA (mt-tRNA(Val)), which plays an integral structural role, and 52 different proteins. mL40 binds to the major groove of the anticodon stem of mt-tRNA(Val) in the central protuberance. As to expression, ubiquitous.

The protein localises to the mitochondrion. This chain is Large ribosomal subunit protein mL40 (MRPL40), found in Homo sapiens (Human).